Here is a 455-residue protein sequence, read N- to C-terminus: tRNA modification GTPase MnmE (455 aa).

(6S)-5-formyl-5,6,7,8-tetrahydrofolate-binding residues include Arg26, Glu86, and Arg125. A TrmE-type G domain is found at 222–376 (GLKTAIIGRP…VEEKINQIFF (155 aa)). Asn232 serves as a coordination point for K(+). Residues 232-237 (NVGKSS), 251-257 (TDIAGTT), and 276-279 (DTAG) each bind GTP. Position 236 (Ser236) interacts with Mg(2+). 3 residues coordinate K(+): Thr251, Ile253, and Thr256. Mg(2+) is bound at residue Thr257. Lys455 serves as a coordination point for (6S)-5-formyl-5,6,7,8-tetrahydrofolate.

Belongs to the TRAFAC class TrmE-Era-EngA-EngB-Septin-like GTPase superfamily. TrmE GTPase family. Homodimer. Heterotetramer of two MnmE and two MnmG subunits. K(+) serves as cofactor.

The protein resides in the cytoplasm. Functionally, exhibits a very high intrinsic GTPase hydrolysis rate. Involved in the addition of a carboxymethylaminomethyl (cmnm) group at the wobble position (U34) of certain tRNAs, forming tRNA-cmnm(5)s(2)U34. The polypeptide is tRNA modification GTPase MnmE (Lactococcus lactis subsp. lactis (strain IL1403) (Streptococcus lactis)).